Reading from the N-terminus, the 549-residue chain is Glucose-6-phosphate isomerase (549 aa).

Catalysis depends on Glu355, which acts as the Proton donor. Catalysis depends on residues His386 and Lys514.

The protein belongs to the GPI family.

Its subcellular location is the cytoplasm. It carries out the reaction alpha-D-glucose 6-phosphate = beta-D-fructose 6-phosphate. It functions in the pathway carbohydrate biosynthesis; gluconeogenesis. The protein operates within carbohydrate degradation; glycolysis; D-glyceraldehyde 3-phosphate and glycerone phosphate from D-glucose: step 2/4. Functionally, catalyzes the reversible isomerization of glucose-6-phosphate to fructose-6-phosphate. In Enterobacter sp. (strain 638), this protein is Glucose-6-phosphate isomerase.